Reading from the N-terminus, the 121-residue chain is Small ribosomal subunit protein uS13 (121 aa).

Residues 92–121 are disordered; the sequence is RRGLPVRGQKTKNNSRTRKGPRKTMANKKK.

Belongs to the universal ribosomal protein uS13 family. In terms of assembly, part of the 30S ribosomal subunit. Forms a loose heterodimer with protein S19. Forms two bridges to the 50S subunit in the 70S ribosome.

Functionally, located at the top of the head of the 30S subunit, it contacts several helices of the 16S rRNA. In the 70S ribosome it contacts the 23S rRNA (bridge B1a) and protein L5 of the 50S subunit (bridge B1b), connecting the 2 subunits; these bridges are implicated in subunit movement. Contacts the tRNAs in the A and P-sites. The chain is Small ribosomal subunit protein uS13 from Oceanobacillus iheyensis (strain DSM 14371 / CIP 107618 / JCM 11309 / KCTC 3954 / HTE831).